Consider the following 948-residue polypeptide: ATPase 8, plasma membrane-type (948 aa).

At 1–64 (MATEFSWDEI…EKSENKFLKF (64 aa)) the chain is on the cytoplasmic side. Residues 65-84 (LGFMWNPLSWVMESAAIMAI) form a helical membrane-spanning segment. The Extracellular portion of the chain corresponds to 85–96 (VLANGGGKAPDW). A helical transmembrane segment spans residues 97-117 (QDFIGIMVLLIINSTISFIEE). The Cytoplasmic segment spans residues 118 to 246 (NNAGNAAAAL…GHFQKVLTSI (129 aa)). The helical transmembrane segment at 247 to 267 (GNFCICSIGLGMLIEILIMYP) threads the bilayer. Over 268 to 276 (IQHRTYRDG) the chain is Extracellular. Residues 277–294 (IDNLLVLLIGGIPIAMPT) form a helical membrane-spanning segment. Residues 295-646 (VLSVTMAIGS…TSRAIFQRMK (352 aa)) are Cytoplasmic-facing. Asp-332 (4-aspartylphosphate intermediate) is an active-site residue. 2 residues coordinate Mg(2+): Asp-591 and Asp-595. A helical membrane pass occupies residues 647–668 (NYTIYAVSITIRIVLGFMLVAL). Over 669-673 (IWRFD) the chain is Extracellular. The chain crosses the membrane as a helical span at residues 674–696 (FAPFMVLIIAILNDGTIMTISKD). The Cytoplasmic segment spans residues 697–712 (RVKPSPVPDSWKLNEI). The helical transmembrane segment at 713-733 (FATGVVLGTYMALTTVLFFWL) threads the bilayer. At 734-754 (AHDTDFFSKTFGVRSIQGNEE) the chain is on the extracellular side. Residues 755–775 (ELMAALYLQVSIISQALIFVT) traverse the membrane as a helical segment. Topologically, residues 776–787 (RSRSWSFVERPG) are cytoplasmic. A helical transmembrane segment spans residues 788–808 (FLLLIAFVIAQLVATLIAVYA). The Extracellular segment spans residues 809 to 816 (NWGFARIV). Residues 817-837 (GCGWGWAGGIWVYSIITYIPL) traverse the membrane as a helical segment. The Cytoplasmic segment spans residues 838 to 948 (DILKFIIRYA…IDTIQQHYTV (111 aa)). Thr-884 is subject to Phosphothreonine. Ser-930 is subject to Phosphoserine. The segment at 946-948 (YTV) is interaction with 14-3-3 proteins. Thr-947 is modified (phosphothreonine).

It belongs to the cation transport ATPase (P-type) (TC 3.A.3) family. Type IIIA subfamily. In terms of assembly, binds to 14-3-3 proteins. The binding is induced by phosphorylation of Thr-947. Binding to 14-3-3 proteins activates the H(+)-ATPase. In terms of tissue distribution, expressed in guard cells, roots and leaves, and barely in mesophyll cells.

Its subcellular location is the membrane. The enzyme catalyses ATP + H2O + H(+)(in) = ADP + phosphate + 2 H(+)(out). Its function is as follows. The plasma membrane H(+) ATPase of plants and fungi generates a proton gradient that drives the active transport of nutrients by H(+)-symport. The resulting external acidification and/or internal alkinization may mediate growth responses. This is ATPase 8, plasma membrane-type (AHA8) from Arabidopsis thaliana (Mouse-ear cress).